We begin with the raw amino-acid sequence, 313 residues long: Olfactory receptor 2B6 (313 aa).

At 1-27 (MSWANESITGEFVLLGFSDQPWLEFPL) the chain is on the extracellular side. N-linked (GlcNAc...) asparagine glycosylation occurs at Asn5. The chain crosses the membrane as a helical span at residues 28–48 (FVVFLTSYIVTIFGNLNIILV). Residues 49-57 (SHLDPKLHT) lie on the Cytoplasmic side of the membrane. A helical membrane pass occupies residues 58-78 (PMYFFLTNLSVIDLCYITCTV). Over 79-97 (PQMLVNLRSIRKVISFGGC) the chain is Extracellular. An intrachain disulfide couples Cys97 to Cys189. The helical transmembrane segment at 98 to 118 (VVQLFMFLALGATECVLLPVM) threads the bilayer. Residues 119–143 (SFDRFVAICRPLHYSVIMHQRLCLQ) lie on the Cytoplasmic side of the membrane. Residues 144–164 (LAAVSWIIGFGNSVWLSILTL) form a helical membrane-spanning segment. The Extracellular segment spans residues 165 to 200 (QLPRCGHYVIDHFLCEVPALLKLSCVDVTANEAELF). A helical transmembrane segment spans residues 201-221 (FVSVFFHLTPLSLILTSYAFI). The Cytoplasmic segment spans residues 222–244 (ARAILKIQSAEGRQKAFGTCSSH). Residues 245–265 (LIVVSLFYGTALSVYFLPPSP) form a helical membrane-spanning segment. Topologically, residues 266–271 (HSKNRR) are extracellular. A helical transmembrane segment spans residues 272–292 (KMVPLFYGIIAPMLNPLIYTL). Over 293–313 (RNKEVKDAFKRLIKRVFLSKN) the chain is Cytoplasmic.

The protein belongs to the G-protein coupled receptor 1 family.

Its subcellular location is the cell membrane. Odorant receptor. The polypeptide is Olfactory receptor 2B6 (Mus musculus (Mouse)).